The following is a 506-amino-acid chain: Sucrose transport protein SUT3 (506 aa).

Over 1–20 (MAVDMELDGGGDGKGKAPPQ) the chain is Cytoplasmic. Residues 21-41 (ISLSGLFLACMVAGGVQYGWA) form a helical membrane-spanning segment. Over 42–54 (LQLSLLTPYIQTL) the chain is Extracellular. Residues 55–75 (GIPHALTSVMWLCGPIAGLIV) form a helical membrane-spanning segment. Topologically, residues 76 to 94 (QPCVGLYSDKCTSSLGRRR) are cytoplasmic. Residues 95–115 (PFILTGCIIICISVIVIGFSS) form a helical membrane-spanning segment. The Extracellular segment spans residues 116–135 (DIGYALGDATEDCKVYRGPR). The helical transmembrane segment at 136-156 (YHAAAAFILGFWLLDFSNNTV) threads the bilayer. Over 157-171 (QGPARALMADLSGRH) the chain is Cytoplasmic. A helical membrane pass occupies residues 172 to 192 (GPSAANAIFCSWMALGNILGY). Topologically, residues 193–220 (SSGSTNDWHKWFPFLMTRACCEACANLK) are extracellular. The chain crosses the membrane as a helical span at residues 221–241 (AAFLVAVVFLGLSTAVTMVFA). The Cytoplasmic segment spans residues 242 to 275 (REVALDPVAAAKRNEGEASGPLAVFKGMKNLPVG). The helical transmembrane segment at 276 to 296 (MPSVLIVTGLTWLSWFPFILF) threads the bilayer. Residues 297 to 327 (DTDWMGREIYHGRPDGSPAEVTAFQEGVRQG) are Extracellular-facing. The chain crosses the membrane as a helical span at residues 328-348 (AFGLLLNSIVLGISSFLIEPM). Residues 349-355 (CRRLGAR) lie on the Cytoplasmic side of the membrane. The helical transmembrane segment at 356-376 (AVWVMSSAVVCVAMAAVSVLS) threads the bilayer. The Extracellular portion of the chain corresponds to 377–404 (AWSLGDFGGSVQDAARAPAEEGGVRASA). The chain crosses the membrane as a helical span at residues 405 to 425 (LALFVFLGLPFAVLCSVPFAV). Over 426-441 (TAQLTASRGGGQGLCT) the chain is Cytoplasmic. A helical membrane pass occupies residues 442–462 (GVLNISIVVPQMAIALGAGPW). The Extracellular portion of the chain corresponds to 463 to 470 (DELFGEGN). Residues 471 to 491 (IPAFAMASVFAAAAAAAGVVL) traverse the membrane as a helical segment. Residues 492–506 (LPKVSVRSVSMAGGH) are Cytoplasmic-facing.

It belongs to the glycoside-pentoside-hexuronide (GPH) cation symporter transporter (TC 2.A.2.4) family. In terms of assembly, homodimer.

The protein localises to the cell membrane. It participates in glycan biosynthesis; sucrose metabolism. Functionally, responsible for the transport of sucrose into the cell, with the concomitant uptake of protons (symport system). May also transport other glucosides. In Oryza sativa subsp. indica (Rice), this protein is Sucrose transport protein SUT3 (SUT3).